Consider the following 211-residue polypeptide: MAYEYNEEWVPQTRLGKLVFDGQVTSMDEAMDSGLPIRESKIVDLLLPELEDEVLDINMVQRMTDSGRRVKFRATVIVGNGDGFVGLGQAKDVQVGPAIRKAIDNAKINITRIKRGCGSWECGCGLPHTVPSEVNGKAGSVTVVLKPAPRGLGLAAGGTARKVLEKAGVKDVWTRTEGQTRTTLNFAKATYNALMNTGTVRRPIVFDETEA.

Residues 50-113 (LEDEVLDINM…DNAKINITRI (64 aa)) form the S5 DRBM domain.

The protein belongs to the universal ribosomal protein uS5 family. As to quaternary structure, part of the 30S ribosomal subunit. Contacts protein S4.

Functionally, with S4 and S12 plays an important role in translational accuracy. The chain is Small ribosomal subunit protein uS5 from Methanococcoides burtonii (strain DSM 6242 / NBRC 107633 / OCM 468 / ACE-M).